We begin with the raw amino-acid sequence, 182 residues long: UPF0423 protein BRA0381/BS1330_II0378 (182 aa).

An N-terminal signal peptide occupies residues 1–24; the sequence is MKNLFRTAALMVPLSLALAYGAQA.

It belongs to the UPF0423 family.

The sequence is that of UPF0423 protein BRA0381/BS1330_II0378 from Brucella suis biovar 1 (strain 1330).